Consider the following 489-residue polypeptide: Arginine biosynthesis bifunctional protein ArgJ 2, mitochondrial (489 aa).

Residues 1–11 (MLLISRIGARH) constitute a mitochondrion transit peptide. Substrate contacts are provided by threonine 205, lysine 234, threonine 245, glutamate 341, and asparagine 484. Catalysis depends on threonine 245, which acts as the Nucleophile.

The protein belongs to the ArgJ family. Heterodimer of an alpha and a beta chain. Post-translationally, the alpha and beta chains are autoproteolytically processed from a single precursor protein within the mitochondrion.

The protein resides in the mitochondrion matrix. The catalysed reaction is N(2)-acetyl-L-ornithine + L-glutamate = N-acetyl-L-glutamate + L-ornithine. The enzyme catalyses L-glutamate + acetyl-CoA = N-acetyl-L-glutamate + CoA + H(+). Its pathway is amino-acid biosynthesis; L-arginine biosynthesis; L-ornithine and N-acetyl-L-glutamate from L-glutamate and N(2)-acetyl-L-ornithine (cyclic): step 1/1. It functions in the pathway amino-acid biosynthesis; L-arginine biosynthesis; N(2)-acetyl-L-ornithine from L-glutamate: step 1/4. Its function is as follows. Catalyzes two activities which are involved in the cyclic version of arginine biosynthesis: the synthesis of acetylglutamate from glutamate and acetyl-CoA, and of ornithine by transacetylation between acetylornithine and glutamate. The protein is Arginine biosynthesis bifunctional protein ArgJ 2, mitochondrial of Sclerotinia sclerotiorum (strain ATCC 18683 / 1980 / Ss-1) (White mold).